We begin with the raw amino-acid sequence, 472 residues long: Glutamate--tRNA ligase 1 (472 aa).

Positions 9–19 (PSPTGLLHVGN) match the 'HIGH' region motif. Residues 112–131 (AMAEKRPPRYDGTWRDRDPS) are compositionally biased toward basic and acidic residues. The segment at 112–133 (AMAEKRPPRYDGTWRDRDPSEA) is disordered. Positions 238–242 (KLSKR) match the 'KMSKS' region motif. ATP is bound at residue Lys241.

This sequence belongs to the class-I aminoacyl-tRNA synthetase family. Glutamate--tRNA ligase type 1 subfamily. As to quaternary structure, monomer.

Its subcellular location is the cytoplasm. It carries out the reaction tRNA(Glu) + L-glutamate + ATP = L-glutamyl-tRNA(Glu) + AMP + diphosphate. Its function is as follows. Catalyzes the attachment of glutamate to tRNA(Glu) in a two-step reaction: glutamate is first activated by ATP to form Glu-AMP and then transferred to the acceptor end of tRNA(Glu). This chain is Glutamate--tRNA ligase 1, found in Gluconobacter oxydans (strain 621H) (Gluconobacter suboxydans).